A 218-amino-acid chain; its full sequence is 23 kDa integral membrane protein (218 aa).

The Cytoplasmic segment spans residues 1 to 12 (MATLGTGMRCLK). A helical transmembrane segment spans residues 13–36 (SCVFVLNIICLLCSLVLIGAGAYV). Residues 37–55 (EVKFSQYGDNLHKVWQAAP) lie on the Extracellular side of the membrane. The helical transmembrane segment at 56–71 (IAIIVVGVIILIVSFL) threads the bilayer. Residues 72-82 (GCCGAIKENVC) lie on the Cytoplasmic side of the membrane. The chain crosses the membrane as a helical span at residues 83 to 108 (MLYMYAFFLVVLLIAELAAAIVAVVY). Residues 109–183 (KDRIDSEIDA…SVFGAFLKRN (75 aa)) are Extracellular-facing. An N-linked (GlcNAc...) asparagine glycan is attached at asparagine 165. A helical transmembrane segment spans residues 184–205 (LVIVACVAFGVCFFQLLSIVIA). The Cytoplasmic portion of the chain corresponds to 206 to 218 (CCLGRQIKEYENV).

The protein belongs to the tetraspanin (TM4SF) family.

It localises to the membrane. This chain is 23 kDa integral membrane protein, found in Schistosoma mansoni (Blood fluke).